The sequence spans 655 residues: Gastrulation defective protein 1 homolog (655 aa).

Disordered regions lie at residues 1–54 (MQRG…EQMI) and 83–165 (AKVF…DEQS). 3 stretches are compositionally biased toward basic and acidic residues: residues 23 to 36 (RSNETEAEDAKEST), 91 to 115 (QIEKARVTRPGMDKKREESKPKEDD), and 134 to 146 (TDKEKATKESSKD). Positions 147 to 164 (EDSDDDDYSSDEDSDDEQ) are enriched in acidic residues. 7 WD repeats span residues 180-219 (HGSRAVLALAGDPSGARLVSGSIDYDMCFWDFAGMDSSMR), 227-268 (CENH…ECCK), 281-321 (GHVA…EQLQ), 330-369 (GLRTNAASCNFNRDATLIAAGCVDGSIQTWDTRKMFVNTT), 377-416 (QKGSEITSIVFSYMGQQLATRSNDETMKLWDLRQFKQPLH), 422-467 (FSRY…EVQR), and 470-510 (VSNA…RGAK). 2 disordered regions span residues 544–580 (KSRTSRKRMEKARMDPVKSQRPDLPITSGQGGRVASS) and 633–655 (AIFSEKLPADEPATKKPKTEADK). Basic and acidic residues-rich tracts occupy residues 554–564 (KARMDPVKSQR) and 639–655 (LPADEPATKKPKTEADK).

This sequence belongs to the WD repeat GAD-1 family.

In Drosophila melanogaster (Fruit fly), this protein is Gastrulation defective protein 1 homolog.